A 205-amino-acid polypeptide reads, in one-letter code: Large ribosomal subunit protein uL18 (205 aa).

It belongs to the universal ribosomal protein uL18 family. In terms of assembly, part of the 50S ribosomal subunit. Contacts the 5S and 23S rRNAs.

Functionally, this is one of the proteins that bind and probably mediate the attachment of the 5S RNA into the large ribosomal subunit, where it forms part of the central protuberance. The protein is Large ribosomal subunit protein uL18 of Haloquadratum walsbyi (strain DSM 16790 / HBSQ001).